Here is a 150-residue protein sequence, read N- to C-terminus: 3-hydroxyacyl-[acyl-carrier-protein] dehydratase FabZ (150 aa).

His54 is an active-site residue.

This sequence belongs to the thioester dehydratase family. FabZ subfamily.

The protein localises to the cytoplasm. It catalyses the reaction a (3R)-hydroxyacyl-[ACP] = a (2E)-enoyl-[ACP] + H2O. In terms of biological role, involved in unsaturated fatty acids biosynthesis. Catalyzes the dehydration of short chain beta-hydroxyacyl-ACPs and long chain saturated and unsaturated beta-hydroxyacyl-ACPs. The polypeptide is 3-hydroxyacyl-[acyl-carrier-protein] dehydratase FabZ (Psychromonas ingrahamii (strain DSM 17664 / CCUG 51855 / 37)).